Here is a 253-residue protein sequence, read N- to C-terminus: MKTLQAKLSNKKNNFVPYIMAGDHERGLEGLNETIQLLEQAGSSAIEIGVPFSDPVADGPVIEQAGLRALAKNVSLSKILDSLKSIETEVPLVIMTYFNPVYQFGIENFVAALENTAVKGLIIPDLPKEHEAYIKPFITDKDICLVPLVSLTTPISRQKELVVDAEGFIYAVAINGVTGKENAYSNQLDHHLETLSKLTDIPVLTGFGISTLTDVERFNKVSAGVIVGSKIVRDLHENKESDVIKFIKNAINF.

Residues E47 and D58 each act as proton acceptor in the active site.

This sequence belongs to the TrpA family. In terms of assembly, tetramer of two alpha and two beta chains.

The catalysed reaction is (1S,2R)-1-C-(indol-3-yl)glycerol 3-phosphate + L-serine = D-glyceraldehyde 3-phosphate + L-tryptophan + H2O. Its pathway is amino-acid biosynthesis; L-tryptophan biosynthesis; L-tryptophan from chorismate: step 5/5. The alpha subunit is responsible for the aldol cleavage of indoleglycerol phosphate to indole and glyceraldehyde 3-phosphate. The chain is Tryptophan synthase alpha chain from Lactococcus lactis subsp. cremoris (strain SK11).